Reading from the N-terminus, the 287-residue chain is MPRSFLVKTHSSHRVPNYGKLETLREANGSCSACKELAGSRHLPDEEAPCNPSDPLQPWDSTSAVACISLPLLPNHRETLGVSGPEPQETSWVGPRAAQAPSVTLKDSFTLPPLLVLPTRWPPILGPDGALNEHLRAEGTSRVPGSFECIHCHRPYHTLAGLARHQQLHCHLPTGRAFTCRYCDKEYASLGALKMHIRTHTLPCICKVCGKAFSRPWLLQGHIRTHTGEKPYTCSHCSRAFADRSNLRAHLQTHVGTKKYRCAVCPKAFSRMSLLARHEEAGCCPGP.

The tract at residues 1-20 (MPRSFLVKTHSSHRVPNYGK) is SNAG domain. 4 C2H2-type zinc fingers span residues 147-169 (FECIHCHRPYHTLAGLARHQQLH), 178-200 (FTCRYCDKEYASLGALKMHIRTH), 204-226 (CICKVCGKAFSRPWLLQGHIRTH), and 232-254 (YTCSHCSRAFADRSNLRAHLQTH). The segment at 260-282 (YRCAVCPKAFSRMSLLARHEEAG) adopts a C2H2-type 5; degenerate zinc-finger fold.

Belongs to the snail C2H2-type zinc-finger protein family. Highly expressed in skeletal muscle and thymus. Lower expression in heart, lung and spleen.

Its subcellular location is the nucleus. Its function is as follows. Seems to inhibit myoblast differentiation. Transcriptional repressor of E-box-dependent transactivation of downstream myogenic bHLHs genes. Binds preferentially to the canonical E-box sequences 5'-CAGGTG-3' and 5'-CACCTG-3'. This Mus musculus (Mouse) protein is Zinc finger protein SNAI3 (Snai3).